We begin with the raw amino-acid sequence, 181 residues long: MSDTLKKYYYKKIVPKLIDQFKYKNIHQVPKLVKVTINRGLGEASQNAKALDSSIKEIATITGQKPVVTRAKKAIAGFKIRQGMPVGVMVTLRSQRMYEFIERLINLALPRIRDFRGINPKSFDGRGNYSLGVKEQLIFPEIEYDKIDQIRGMDISIITTAKTDEEGRALLKEMGMPFRSN.

It belongs to the universal ribosomal protein uL5 family. Part of the 50S ribosomal subunit; part of the 5S rRNA/L5/L18/L25 subcomplex. Contacts the 5S rRNA and the P site tRNA. Forms a bridge to the 30S subunit in the 70S ribosome.

Its function is as follows. This is one of the proteins that bind and probably mediate the attachment of the 5S RNA into the large ribosomal subunit, where it forms part of the central protuberance. In the 70S ribosome it contacts protein S13 of the 30S subunit (bridge B1b), connecting the 2 subunits; this bridge is implicated in subunit movement. Contacts the P site tRNA; the 5S rRNA and some of its associated proteins might help stabilize positioning of ribosome-bound tRNAs. The polypeptide is Large ribosomal subunit protein uL5 (Trichodesmium erythraeum (strain IMS101)).